Reading from the N-terminus, the 454-residue chain is Guanine deaminase (454 aa).

Positions 82 and 84 each coordinate Zn(2+). Residues 84-87 (HAPQ), 213-214 (RF), 240-243 (HISE), and D330 each bind substrate. Residues H240 and D330 each contribute to the Zn(2+) site. S453 carries the phosphoserine modification.

This sequence belongs to the metallo-dependent hydrolases superfamily. ATZ/TRZ family. Homodimer. The cofactor is Zn(2+).

It catalyses the reaction guanine + H2O + H(+) = xanthine + NH4(+). It participates in purine metabolism; guanine degradation; xanthine from guanine: step 1/1. In terms of biological role, catalyzes the hydrolytic deamination of guanine, producing xanthine and ammonia. In Rattus norvegicus (Rat), this protein is Guanine deaminase (Gda).